The primary structure comprises 439 residues: Xylose isomerase (439 aa).

Catalysis depends on residues H101 and D104. Mg(2+) is bound by residues E232, E268, H271, D296, D307, D309, and D339.

Belongs to the xylose isomerase family. In terms of assembly, homotetramer. Mg(2+) is required as a cofactor.

It localises to the cytoplasm. The catalysed reaction is alpha-D-xylose = alpha-D-xylulofuranose. The sequence is that of Xylose isomerase from Yersinia enterocolitica serotype O:8 / biotype 1B (strain NCTC 13174 / 8081).